We begin with the raw amino-acid sequence, 251 residues long: tRNA (guanine-N(7)-)-methyltransferase (251 aa).

S-adenosyl-L-methionine contacts are provided by residues G72, 95–96, 132–133, and L152; these read EI and NA. Residue D155 is part of the active site. S-adenosyl-L-methionine is bound at residue 230–232; that stretch reads SEE.

It belongs to the class I-like SAM-binding methyltransferase superfamily. TrmB family.

The protein localises to the nucleus. It catalyses the reaction guanosine(46) in tRNA + S-adenosyl-L-methionine = N(7)-methylguanosine(46) in tRNA + S-adenosyl-L-homocysteine. It functions in the pathway tRNA modification; N(7)-methylguanine-tRNA biosynthesis. Its function is as follows. Catalyzes the formation of N(7)-methylguanine at position 46 (m7G46) in tRNA. The chain is tRNA (guanine-N(7)-)-methyltransferase from Drosophila willistoni (Fruit fly).